Here is a 356-residue protein sequence, read N- to C-terminus: Tyrosine recombinase XerS (356 aa).

The Core-binding (CB) domain occupies 16–121; it reads IMPWYVLDYY…ALSSLYKYLT (106 aa). In terms of domain architecture, Tyr recombinase spans 169 to 354; it reads AFLDYVDKEY…VNDEQKNALD (186 aa). Residues arginine 210, lysine 234, histidine 306, arginine 309, and histidine 332 contribute to the active site. The active-site O-(3'-phospho-DNA)-tyrosine intermediate is tyrosine 341.

The protein belongs to the 'phage' integrase family. XerS subfamily.

The protein resides in the cytoplasm. Its activity is regulated as follows. FtsK is required for recombination. Site-specific tyrosine recombinase, which acts by catalyzing the cutting and rejoining of the recombining DNA molecules. Essential to convert dimers of the bacterial chromosome into monomers to permit their segregation at cell division. The sequence is that of Tyrosine recombinase XerS from Streptococcus pyogenes serotype M1.